The primary structure comprises 614 residues: V-type proton ATPase catalytic subunit A isoform 1 (614 aa).

Residue 247–254 (GAFGCGKT) coordinates ATP.

This sequence belongs to the ATPase alpha/beta chains family. V-ATPase is a heteromultimeric enzyme made up of two complexes: the ATP-hydrolytic V1 complex and the proton translocation V0 complex. The V1 complex consists of three catalytic AB heterodimers that form a heterohexamer, three peripheral stalks each consisting of EG heterodimers, one central rotor including subunits D and F, and the regulatory subunits C and H. The proton translocation complex V0 consists of the proton transport subunit a, a ring of proteolipid subunits c9c'', rotary subunit d, subunits e and f, and the accessory subunits VhaAC45 and ATP6AP2.

The catalysed reaction is ATP + H2O + 4 H(+)(in) = ADP + phosphate + 5 H(+)(out). ATP hydrolysis occurs at the interface between the nucleotide-binding domains of subunits A and B. ATP hydrolysis triggers a conformational change in the subunits D and F, which induces a shift of subunit d. The c-ring is subsequently rotated and results in a continuous proton translocation across the membrane. Its function is as follows. Catalytic subunit of the V1 complex of vacuolar(H+)-ATPase (V-ATPase), a multisubunit enzyme composed of a peripheral complex (V1) that hydrolyzes ATP and a membrane integral complex (V0) that translocates protons. V-ATPase is responsible for acidifying and maintaining the pH of intracellular compartments and in some cell types, is targeted to the plasma membrane, where it is responsible for acidifying the extracellular environment. The sequence is that of V-type proton ATPase catalytic subunit A isoform 1 (Vha68-1) from Drosophila melanogaster (Fruit fly).